We begin with the raw amino-acid sequence, 77 residues long: Translation initiation factor IF-1, chloroplastic (77 aa).

The S1-like domain occupies 1–71 (MKEQKWIHEG…TRGRIIYRLR (71 aa)).

The protein belongs to the IF-1 family. Component of the 30S ribosomal translation pre-initiation complex which assembles on the 30S ribosome in the order IF-2 and IF-3, IF-1 and N-formylmethionyl-tRNA(fMet); mRNA recruitment can occur at any time during PIC assembly.

Its subcellular location is the plastid. The protein localises to the chloroplast. One of the essential components for the initiation of protein synthesis. Stabilizes the binding of IF-2 and IF-3 on the 30S subunit to which N-formylmethionyl-tRNA(fMet) subsequently binds. Helps modulate mRNA selection, yielding the 30S pre-initiation complex (PIC). Upon addition of the 50S ribosomal subunit IF-1, IF-2 and IF-3 are released leaving the mature 70S translation initiation complex. The sequence is that of Translation initiation factor IF-1, chloroplastic from Lactuca sativa (Garden lettuce).